A 370-amino-acid chain; its full sequence is Lipoyl synthase, mitochondrial (370 aa).

7 residues coordinate [4Fe-4S] cluster: Cys104, Cys109, Cys115, Cys135, Cys139, Cys142, and Ser350. A Radical SAM core domain is found at Gly118–Leu339.

It belongs to the radical SAM superfamily. Lipoyl synthase family. The cofactor is [4Fe-4S] cluster.

The protein resides in the mitochondrion. The catalysed reaction is [[Fe-S] cluster scaffold protein carrying a second [4Fe-4S](2+) cluster] + N(6)-octanoyl-L-lysyl-[protein] + 2 oxidized [2Fe-2S]-[ferredoxin] + 2 S-adenosyl-L-methionine + 4 H(+) = [[Fe-S] cluster scaffold protein] + N(6)-[(R)-dihydrolipoyl]-L-lysyl-[protein] + 4 Fe(3+) + 2 hydrogen sulfide + 2 5'-deoxyadenosine + 2 L-methionine + 2 reduced [2Fe-2S]-[ferredoxin]. It functions in the pathway protein modification; protein lipoylation via endogenous pathway; protein N(6)-(lipoyl)lysine from octanoyl-[acyl-carrier-protein]: step 2/2. Its function is as follows. Catalyzes the radical-mediated insertion of two sulfur atoms into the C-6 and C-8 positions of the octanoyl moiety bound to the lipoyl domains of lipoate-dependent enzymes, thereby converting the octanoylated domains into lipoylated derivatives. The protein is Lipoyl synthase, mitochondrial of Kluyveromyces lactis (strain ATCC 8585 / CBS 2359 / DSM 70799 / NBRC 1267 / NRRL Y-1140 / WM37) (Yeast).